Reading from the N-terminus, the 23-residue chain is Ocellatin-LB2 (23 aa).

Asparagine 23 bears the Asparagine amide mark.

As to expression, expressed by the skin glands.

The protein localises to the secreted. Antibacterial peptide that inhibits the Gram-negative bacterium A.actinomycetemcomitans ATCC 29522 (MIC=210 uM). No activity against the bacteria E.coli ATCC 25922 and S.aureus ATCC 25923, or the fungi C.albicans ATCC 18804 and C.lusitaniae ATCC 56936. Does not show hemolytic activity towards rabbit erythrocytes. This Leptodactylus labyrinthicus (Labyrinth frog) protein is Ocellatin-LB2.